Reading from the N-terminus, the 694-residue chain is Elongation factor G (694 aa).

Residues 8 to 287 (EDYRNFGIMA…AVVEFLPAPT (280 aa)) enclose the tr-type G domain. Residues 17 to 24 (AHIDAGKT), 86 to 90 (DTPGH), and 140 to 143 (NKMD) contribute to the GTP site.

The protein belongs to the TRAFAC class translation factor GTPase superfamily. Classic translation factor GTPase family. EF-G/EF-2 subfamily.

It localises to the cytoplasm. Its function is as follows. Catalyzes the GTP-dependent ribosomal translocation step during translation elongation. During this step, the ribosome changes from the pre-translocational (PRE) to the post-translocational (POST) state as the newly formed A-site-bound peptidyl-tRNA and P-site-bound deacylated tRNA move to the P and E sites, respectively. Catalyzes the coordinated movement of the two tRNA molecules, the mRNA and conformational changes in the ribosome. The protein is Elongation factor G of Brucella melitensis biotype 1 (strain ATCC 23456 / CCUG 17765 / NCTC 10094 / 16M).